A 135-amino-acid polypeptide reads, in one-letter code: uncharacterized protein (135 aa).

This is an uncharacterized protein from Aquifex aeolicus (strain VF5).